Reading from the N-terminus, the 481-residue chain is 2-methylisoborneol synthase (481 aa).

Disordered stretches follow at residues 1–125 and 139–160; these read MPDS…PVGP and QAAV…GPVV. The span at 11 to 23 shows a compositional bias: pro residues; that stretch reads TSLPEQPPAPPAT. Positions 24-33 are enriched in low complexity; that stretch reads APDAPAATVT. Composition is skewed to pro residues over residues 52–64 and 71–104; these read VTRP…PSMP and SSPP…PPAT. Positions 105–114 are enriched in low complexity; it reads APETSAATGS. Positions 238, 239, 243, 386, 390, and 394 each coordinate Mg(2+).

It belongs to the terpene synthase family. 2-methylisoborneol synthase subfamily. Mg(2+) serves as cofactor.

The catalysed reaction is (E)-2-methylgeranyl diphosphate + H2O = 2-methylisoborneol + diphosphate. In terms of biological role, catalyzes the cyclization of 2-methylgeranyl diphosphate (2-MeGPP) to 2-methylisoborneol (2-MIB), which likely involves the intermediacy of 2-methyllinalyl diphosphate. In Streptomyces lasalocidi (Streptomyces lasaliensis), this protein is 2-methylisoborneol synthase (tpc).